A 147-amino-acid polypeptide reads, in one-letter code: Microtubule-associated protein 1 light chain 3 gamma (147 aa).

Ser-93 and Ser-96 each carry phosphoserine; by TBK1. Gly-126 carries Phosphatidylethanolamine amidated glycine; alternate lipidation. A lipid anchor (Phosphatidylserine amidated glycine; alternate) is attached at Gly-126. Residues 127–147 (CLESAAPRDGSSLEDRPCNPL) constitute a propeptide, removed in mature form.

Belongs to the ATG8 family. 3 different light chains, LC1 (a cleavage product of MAP1B), LC2 (a cleavage product of MAP1A) and LC3 (produced by one of the MAP1LC3 genes), can associate with the MAP1A or MAP1B heavy chains. Interacts with TP53INP1 and TP53INP2. Interacts with CALCOCO2. Interacts with TECPR2. Interacts with TBC1D5. Found in a complex with UBQLN1 and UBQLN2. Interacts with UBQLN4 (via STI1 1 and 2 domains). Interacts with UBQLN1 in the presence of UBQLN4. Interacts with TRIM5. Interacts with ATG13. Interacts with MEFV and TRIM21. Interacts with WDR81; recruits MAP1LC3C to ubiquitinated protein aggregates in the aggrephagy process. Interacts with MOAP1 (via LIR motif). Interacts with reticulophagy regulators RETREG1, RETREG2 and RETREG3. Interacts with TAX1BP1. Interacts with IRGM. Interacts with SPART. Post-translationally, the precursor molecule is cleaved by ATG4 (ATG4A, ATG4B, ATG4C or ATG4D) to expose the glycine at the C-terminus and form the cytosolic form, LC3-I. The processed form is then activated by APG7L/ATG7, transferred to ATG3 and conjugated to phosphatidylethanolamine (PE) phospholipid to form the membrane-bound form, LC3-II. During non-canonical autophagy, the processed form is conjugated to phosphatidylserine (PS) phospholipid. ATG4 proteins also mediate the delipidation of PE-conjugated forms. In addition, ATG4B and ATG4D mediate delipidation of ATG8 proteins conjugated to PS during non-canonical autophagy. In terms of processing, (Microbial infection) The Legionella effector RavZ is a deconjugating enzyme that hydrolyzes the amide bond between the C-terminal glycine residue and an adjacent aromatic residue in ATG8 proteins conjugated to phosphatidylethanolamine (PE), producing an ATG8 protein that is resistant to reconjugation by the host machinery due to the cleavage of the reactive C-terminal glycine. RavZ is also able to mediate delipidation of ATG8 proteins conjugated to phosphatidylserine (PS). Phosphorylation at Ser-96 and Ser-98 by TBK1 prevents interaction with ATG4 (ATG4A, ATG4B, ATG4C or ATG4D). Phosphorylation by TBK1 on autophagosomes prevents their delipidation by ATG4 and premature removal from nascent autophagosomes. As to expression, most abundant in placenta, lung and ovary.

It localises to the cytoplasmic vesicle. Its subcellular location is the autophagosome membrane. The protein localises to the endomembrane system. It is found in the cytoplasm. The protein resides in the cytoskeleton. In terms of biological role, ubiquitin-like modifier that plays a crucial role in antibacterial autophagy (xenophagy) through the selective binding of CALCOCO2. Recruits all ATG8 family members to infecting bacteria such as S.typhimurium. May also play a role in aggrephagy, the macroautophagic degradation of ubiquitinated and aggregated proteins. The polypeptide is Microtubule-associated protein 1 light chain 3 gamma (MAP1LC3C) (Homo sapiens (Human)).